The following is a 298-amino-acid chain: Tyrosine recombinase XerC (298 aa).

The 83-residue stretch at 1 to 83 (MHAAVERFLH…ALSRFADHLV (83 aa)) folds into the Core-binding (CB) domain. Positions 104 to 283 (HLPRPVDVDQ…DWQHLADAYD (180 aa)) constitute a Tyr recombinase domain. Active-site residues include Arg144, Lys166, His235, Arg238, and His261. The active-site O-(3'-phospho-DNA)-tyrosine intermediate is Tyr270.

This sequence belongs to the 'phage' integrase family. XerC subfamily. Forms a cyclic heterotetrameric complex composed of two molecules of XerC and two molecules of XerD.

It localises to the cytoplasm. In terms of biological role, site-specific tyrosine recombinase, which acts by catalyzing the cutting and rejoining of the recombining DNA molecules. The XerC-XerD complex is essential to convert dimers of the bacterial chromosome into monomers to permit their segregation at cell division. It also contributes to the segregational stability of plasmids. The sequence is that of Tyrosine recombinase XerC from Chromohalobacter salexigens (strain ATCC BAA-138 / DSM 3043 / CIP 106854 / NCIMB 13768 / 1H11).